A 326-amino-acid chain; its full sequence is Ribosomal RNA small subunit methyltransferase H (326 aa).

Residues 45 to 47 (GGH), D65, D113, and Q120 contribute to the S-adenosyl-L-methionine site. The tract at residues 299–326 (PSAEEITRNPRSRSARLRAAERIAHDGR) is disordered. Positions 316–326 (RAAERIAHDGR) are enriched in basic and acidic residues.

The protein belongs to the methyltransferase superfamily. RsmH family.

It localises to the cytoplasm. It carries out the reaction cytidine(1402) in 16S rRNA + S-adenosyl-L-methionine = N(4)-methylcytidine(1402) in 16S rRNA + S-adenosyl-L-homocysteine + H(+). In terms of biological role, specifically methylates the N4 position of cytidine in position 1402 (C1402) of 16S rRNA. In Thermomicrobium roseum (strain ATCC 27502 / DSM 5159 / P-2), this protein is Ribosomal RNA small subunit methyltransferase H.